The primary structure comprises 646 residues: Vitamin K-dependent protein S (646 aa).

The propeptide occupies 1–12; it reads GHASQVLVRKRR. The region spanning 13 to 58 is the Gla domain; the sequence is ANSMLEETKKGNLERECIEELCNKEEAREVFENDPETDYFYPKYLG. Residues Glu-18, Glu-19, Glu-26, Glu-28, Glu-31, Glu-32, Glu-37, Glu-38, Glu-41, Glu-44, and Glu-48 each carry the 4-carboxyglutamate modification. Residues Cys-29 and Cys-34 are joined by a disulfide bond. The thrombin-sensitive stretch occupies residues 59 to 87; it reads CLGSFRAKLFTATRRSANGYPDLRSCVNA. One can recognise an EGF-like 1 domain in the interval 88–126; it reads IPDQCNPLPCSEEGYLNCKDGQATFTCICKPGWQGEKCE. 13 disulfide bridges follow: Cys-92–Cys-105, Cys-97–Cys-114, Cys-116–Cys-125, Cys-132–Cys-146, Cys-142–Cys-155, Cys-157–Cys-170, Cys-176–Cys-188, Cys-183–Cys-197, Cys-199–Cys-212, Cys-218–Cys-227, Cys-223–Cys-236, Cys-238–Cys-253, and Cys-420–Cys-446. Asp-107 is modified ((3R)-3-hydroxyaspartate). Residues 128-171 form the EGF-like 2; calcium-binding domain; it reads DINECKDPTNINGGCSQICDNTAGSYHCSCKSGFVMLANEKDCK. In terms of domain architecture, EGF-like 3; calcium-binding spans 172–213; that stretch reads DMDECSVKPSVCGTAVCKNTPGDFECECSEGYRYNPTAKSCE. Residues 214-254 enclose the EGF-like 4; calcium-binding domain; sequence DIDECSENMCAQLCVNYPGGYSCYCDGKKGFKLAQDKKSCE. 2 consecutive Laminin G-like domains span residues 270-446 and 455-636; these read LLYL…KKHC and YYPG…AHSC. N-linked (GlcNAc...) asparagine glycosylation is found at Asn-470 and Asn-480. The cysteines at positions 609 and 636 are disulfide-linked.

As to quaternary structure, interacts with C4b-binding protein, a regulator of the complex system. In rabbit plasma however, protein S appears to be present only in free form. In terms of processing, the iron and 2-oxoglutarate dependent 3-hydroxylation of aspartate and asparagine is (R) stereospecific within EGF domains. In terms of tissue distribution, plasma.

The protein localises to the secreted. Anticoagulant plasma protein; it is a cofactor to activated protein C in the degradation of coagulation factors Va and VIIIa. It helps to prevent coagulation and stimulating fibrinolysis. The protein is Vitamin K-dependent protein S (PROS1) of Oryctolagus cuniculus (Rabbit).